The sequence spans 333 residues: Tetraacyldisaccharide 4'-kinase (333 aa).

T60–T67 is a binding site for ATP.

It belongs to the LpxK family.

The catalysed reaction is a lipid A disaccharide + ATP = a lipid IVA + ADP + H(+). It functions in the pathway glycolipid biosynthesis; lipid IV(A) biosynthesis; lipid IV(A) from (3R)-3-hydroxytetradecanoyl-[acyl-carrier-protein] and UDP-N-acetyl-alpha-D-glucosamine: step 6/6. In terms of biological role, transfers the gamma-phosphate of ATP to the 4'-position of a tetraacyldisaccharide 1-phosphate intermediate (termed DS-1-P) to form tetraacyldisaccharide 1,4'-bis-phosphate (lipid IVA). This Azotobacter vinelandii (strain DJ / ATCC BAA-1303) protein is Tetraacyldisaccharide 4'-kinase.